Reading from the N-terminus, the 500-residue chain is MSAEKKYVVALDQGTTSSRAIVFDQDANIVGTSQREFTQHYPKAGWVEHDPMEIWATQSSVFTEVLAKTGLRSEEIAAIGITNQRETTVVWEKATGKPIYNAIVWQCRRTAAICEELKARGLEEYVRENTGLVLDAYFSGTKVKWILDNVEGAREKAMNGELLFGTIDTWLVWKMTNGEVHVTDPTNASRTMLYNIRDLKWDQKMLDELGIPMSMLPQVKPSSEVYGYTTRGGGSRIPIAGIAGDQQSALFGQLCFEKGMAKNTYGTGCFMLMNTGTEPVRSNNGLLTTVAIGPKGEVNYALEGAVFMGGATIQWLRDELKIIHDARDTDYFASKVGDTNGVYLVPAFVGLGAPYWDPYARGTMVGLTRGANRNHIIRAALESIAYQSRDVLDAMQQDSGIKLAALKVDGGAVANDFLMQFQADMMHTPVVRPTRIETTAMGAAFLAGLAVGFWKSSEELEDKFSVDREFIPQMDRDDRAKRYNGWKKAVERSRRWAEEE.

Threonine 15 contributes to the ADP binding site. Residues threonine 15, threonine 16, and serine 17 each coordinate ATP. Threonine 15 serves as a coordination point for sn-glycerol 3-phosphate. Arginine 19 provides a ligand contact to ADP. Sn-glycerol 3-phosphate is bound by residues arginine 85, glutamate 86, tyrosine 137, and aspartate 245. Positions 85, 86, 137, 245, and 246 each coordinate glycerol. Positions 267 and 310 each coordinate ADP. Threonine 267, glycine 310, glutamine 314, and glycine 411 together coordinate ATP. ADP-binding residues include glycine 411 and asparagine 415.

It belongs to the FGGY kinase family.

It catalyses the reaction glycerol + ATP = sn-glycerol 3-phosphate + ADP + H(+). Its pathway is polyol metabolism; glycerol degradation via glycerol kinase pathway; sn-glycerol 3-phosphate from glycerol: step 1/1. Its activity is regulated as follows. Inhibited by fructose 1,6-bisphosphate (FBP). Functionally, key enzyme in the regulation of glycerol uptake and metabolism. Catalyzes the phosphorylation of glycerol to yield sn-glycerol 3-phosphate. The polypeptide is Glycerol kinase (Aeromonas hydrophila subsp. hydrophila (strain ATCC 7966 / DSM 30187 / BCRC 13018 / CCUG 14551 / JCM 1027 / KCTC 2358 / NCIMB 9240 / NCTC 8049)).